Reading from the N-terminus, the 202-residue chain is Small ribosomal subunit protein uS4 (202 aa).

The disordered stretch occupies residues 21-42 (LSRKSPRRAYPPGQHGQARRKR). The S4 RNA-binding domain occupies 90 to 152 (MRLDNTVFRL…DRSRKLVETN (63 aa)).

Belongs to the universal ribosomal protein uS4 family. In terms of assembly, part of the 30S ribosomal subunit. Contacts protein S5. The interaction surface between S4 and S5 is involved in control of translational fidelity.

Its function is as follows. One of the primary rRNA binding proteins, it binds directly to 16S rRNA where it nucleates assembly of the body of the 30S subunit. With S5 and S12 plays an important role in translational accuracy. The sequence is that of Small ribosomal subunit protein uS4 from Synechocystis sp. (strain ATCC 27184 / PCC 6803 / Kazusa).